The sequence spans 769 residues: Glutathione biosynthesis bifunctional protein GshAB (769 aa).

The tract at residues 1–347 is glutamate--cysteine ligase; it reads MLDSFKENEA…QLADENENNI (347 aa). The region spanning 514–768 is the ATP-grasp domain; the sequence is KLVLAEHGIR…IGDKILDFLF (255 aa). 541–599 serves as a coordination point for ATP; it reads SLFEDKQIVVKPKSTNYGWGISIFKNKFTLEDYQEALNIAFSYDSSVIIEEFIPGDEFR. Mg(2+) is bound by residues aspartate 721, glutamate 738, and asparagine 740. Mn(2+)-binding residues include aspartate 721, glutamate 738, and asparagine 740.

In the N-terminal section; belongs to the glutamate--cysteine ligase type 1 family. Type 2 subfamily. Monomer. Mg(2+) is required as a cofactor. Mn(2+) serves as cofactor.

It catalyses the reaction L-cysteine + L-glutamate + ATP = gamma-L-glutamyl-L-cysteine + ADP + phosphate + H(+). The catalysed reaction is gamma-L-glutamyl-L-cysteine + glycine + ATP = glutathione + ADP + phosphate + H(+). Its pathway is sulfur metabolism; glutathione biosynthesis; glutathione from L-cysteine and L-glutamate: step 1/2. The protein operates within sulfur metabolism; glutathione biosynthesis; glutathione from L-cysteine and L-glutamate: step 2/2. Synthesizes glutathione from L-glutamate and L-cysteine via gamma-L-glutamyl-L-cysteine. This chain is Glutathione biosynthesis bifunctional protein GshAB, found in Listeria innocua serovar 6a (strain ATCC BAA-680 / CLIP 11262).